Here is a 526-residue protein sequence, read N- to C-terminus: Phosphoenolpyruvate carboxylase (526 aa).

This sequence belongs to the PEPCase type 2 family. Homotetramer. Requires Mg(2+) as cofactor.

The enzyme catalyses oxaloacetate + phosphate = phosphoenolpyruvate + hydrogencarbonate. Functionally, catalyzes the irreversible beta-carboxylation of phosphoenolpyruvate (PEP) to form oxaloacetate (OAA), a four-carbon dicarboxylic acid source for the tricarboxylic acid cycle. The chain is Phosphoenolpyruvate carboxylase from Methanosarcina acetivorans (strain ATCC 35395 / DSM 2834 / JCM 12185 / C2A).